A 243-amino-acid chain; its full sequence is MGRAFEFRKARKFKRWGNMARVFTKLGKEITIAAKQGGPEPENNPRLRVLMQNAKKENMPKENVERAIKRAVSKDFTDYKEMNYEGYGPFGIAIFVETATDNTTRTVANVRSYFNKNGGSLGTSGSLEFLFDHKCVFHIAKKEDLSLEDLELELIDFGVDEVEEDEDEVVLYGEFAQNSAIQKYLEENGFEILSSEFVRIPNDLKEVTPEQRESIEKIIEKLEEDEDVQNVFHNMKEDDSEEE.

This sequence belongs to the TACO1 family.

It is found in the cytoplasm. This chain is Probable transcriptional regulatory protein BDI_1233, found in Parabacteroides distasonis (strain ATCC 8503 / DSM 20701 / CIP 104284 / JCM 5825 / NCTC 11152).